The following is an 861-amino-acid chain: Benzylsuccinate synthase alpha subunit (861 aa).

The PFL domain occupies 40–712 (TERTRRLKAR…QAVGLYMEVG (673 aa)). A disordered region spans residues 718–744 (TPDGRFGGEAADDGGISPYSGTDKKGP). Positions 731–850 (GGISPYSGTD…IIARNEQNFN (120 aa)) constitute a Glycine radical domain. Position 825 is a glycine radical (G825).

This sequence belongs to the glycyl radical enzyme (GRE) family. BSS subfamily. Heterohexamer composed of 2 alpha subunits, 2 beta subunits and 2 gamma subunits.

It catalyses the reaction toluene + fumarate = 2-benzylsuccinate. It participates in xenobiotic degradation; toluene degradation. With respect to regulation, activated by the benzylsuccinate synthase activating enzyme BssD. Rapidly inactivated by oxygen. Functionally, catalyzes the addition of fumarate to the methyl group of toluene, leading to the formation of benzylsuccinate. The protein is Benzylsuccinate synthase alpha subunit (bssA) of Thauera aromatica.